A 137-amino-acid chain; its full sequence is Putative pre-16S rRNA nuclease (137 aa).

The protein belongs to the YqgF nuclease family.

The protein resides in the cytoplasm. In terms of biological role, could be a nuclease involved in processing of the 5'-end of pre-16S rRNA. This Desulforamulus reducens (strain ATCC BAA-1160 / DSM 100696 / MI-1) (Desulfotomaculum reducens) protein is Putative pre-16S rRNA nuclease.